Reading from the N-terminus, the 421-residue chain is Cytochrome c biogenesis protein Ccs1 (421 aa).

3 helical membrane passes run 12-32 (LRFAIFILLVIAAFSVIGTVI), 71-91 (TWWFITLILLFGISLLTCTLL), and 157-177 (IAPIIVHFSMIIILIGAIIGS).

This sequence belongs to the Ccs1/CcsB family. May interact with CcsA.

The protein localises to the plastid. The protein resides in the chloroplast thylakoid membrane. In terms of biological role, required during biogenesis of c-type cytochromes (cytochrome c6 and cytochrome f) at the step of heme attachment. This is Cytochrome c biogenesis protein Ccs1 from Thalassiosira pseudonana (Marine diatom).